We begin with the raw amino-acid sequence, 79 residues long: Acyl carrier protein (79 aa).

The Carrier domain occupies 2–77; it reads SEIADKVKKI…DAIDYIEKQK (76 aa). The residue at position 37 (Ser37) is an O-(pantetheine 4'-phosphoryl)serine.

It belongs to the acyl carrier protein (ACP) family. Post-translationally, 4'-phosphopantetheine is transferred from CoA to a specific serine of apo-ACP by AcpS. This modification is essential for activity because fatty acids are bound in thioester linkage to the sulfhydryl of the prosthetic group.

It localises to the cytoplasm. It participates in lipid metabolism; fatty acid biosynthesis. In terms of biological role, carrier of the growing fatty acid chain in fatty acid biosynthesis. The chain is Acyl carrier protein from Gluconacetobacter diazotrophicus (strain ATCC 49037 / DSM 5601 / CCUG 37298 / CIP 103539 / LMG 7603 / PAl5).